The following is a 360-amino-acid chain: Peptide chain release factor 1 (360 aa).

The residue at position 235 (Gln235) is an N5-methylglutamine. Over residues 284–293 (HKRQQEEAST) the composition is skewed to basic and acidic residues. The segment at 284-305 (HKRQQEEASTRRNLLGSGDRSD) is disordered.

Belongs to the prokaryotic/mitochondrial release factor family. Methylated by PrmC. Methylation increases the termination efficiency of RF1.

It localises to the cytoplasm. In terms of biological role, peptide chain release factor 1 directs the termination of translation in response to the peptide chain termination codons UAG and UAA. The protein is Peptide chain release factor 1 of Pectobacterium atrosepticum (strain SCRI 1043 / ATCC BAA-672) (Erwinia carotovora subsp. atroseptica).